We begin with the raw amino-acid sequence, 356 residues long: UDP-N-acetylglucosamine--N-acetylmuramyl-(pentapeptide) pyrophosphoryl-undecaprenol N-acetylglucosamine transferase (356 aa).

UDP-N-acetyl-alpha-D-glucosamine contacts are provided by residues 14–16 (TGG), N126, R162, S190, I244, and Q289.

It belongs to the glycosyltransferase 28 family. MurG subfamily.

Its subcellular location is the cell inner membrane. It carries out the reaction di-trans,octa-cis-undecaprenyl diphospho-N-acetyl-alpha-D-muramoyl-L-alanyl-D-glutamyl-meso-2,6-diaminopimeloyl-D-alanyl-D-alanine + UDP-N-acetyl-alpha-D-glucosamine = di-trans,octa-cis-undecaprenyl diphospho-[N-acetyl-alpha-D-glucosaminyl-(1-&gt;4)]-N-acetyl-alpha-D-muramoyl-L-alanyl-D-glutamyl-meso-2,6-diaminopimeloyl-D-alanyl-D-alanine + UDP + H(+). It participates in cell wall biogenesis; peptidoglycan biosynthesis. Functionally, cell wall formation. Catalyzes the transfer of a GlcNAc subunit on undecaprenyl-pyrophosphoryl-MurNAc-pentapeptide (lipid intermediate I) to form undecaprenyl-pyrophosphoryl-MurNAc-(pentapeptide)GlcNAc (lipid intermediate II). The protein is UDP-N-acetylglucosamine--N-acetylmuramyl-(pentapeptide) pyrophosphoryl-undecaprenol N-acetylglucosamine transferase of Cupriavidus necator (strain ATCC 17699 / DSM 428 / KCTC 22496 / NCIMB 10442 / H16 / Stanier 337) (Ralstonia eutropha).